We begin with the raw amino-acid sequence, 414 residues long: COUP transcription factor 2 (414 aa).

The disordered stretch occupies residues 1-72 (MAMVVSTWRD…PGGPGSDKQQ (72 aa)). The span at 27-37 (PPVPGPPPGAP) shows a compositional bias: pro residues. A compositionally biased stretch (low complexity) spans 38–54 (HTPQTPGQGGPASTPAQ). Position 51 is a phosphothreonine (T51). Positions 76 to 151 (HIECVVCGDK…VGMRREAVQR (76 aa)) form a DNA-binding region, nuclear receptor. 2 NR C4-type zinc fingers span residues 79–99 (CVVC…CEGC) and 115–139 (CRAN…LKKC). Residues 117–414 (ANRNCPIDQH…SFNWPYMAIQ (298 aa)) are interaction with ZFPM2. The 227-residue stretch at 177 to 403 (YLSGYISLLL…TLIRDMLLSG (227 aa)) folds into the NR LBD domain. The tract at residues 337 to 414 (LQEKSQCALE…SFNWPYMAIQ (78 aa)) is important for dimerization.

Belongs to the nuclear hormone receptor family. NR2 subfamily. Interacts with SQSTM1. Binds DNA as a dimer; homodimer or heterodimer with NR2F6. Interacts with NCOA1, NCOA2, NCOA3 and PPARGC1A. Interacts with ZFPM2.

The protein resides in the nucleus. Ligand-activated transcription factor. Activated by high concentrations of 9-cis-retinoic acid and all-trans-retinoic acid, but not by dexamethasone, cortisol or progesterone (in vitro). Regulation of the apolipoprotein A-I gene transcription. Binds to DNA site A. May be required to establish ovary identity during early gonad development. This Rattus norvegicus (Rat) protein is COUP transcription factor 2 (Nr2f2).